We begin with the raw amino-acid sequence, 420 residues long: FLYWCH transcription factor 3 (420 aa).

Residues 87-104 (SSTSPDSQPSSSSSVMSS) are compositionally biased toward low complexity. Disordered regions lie at residues 87–107 (SSTS…STDE) and 119–138 (KINK…YTPR). Residues 123-134 (AQRQSSPNSSKP) are compositionally biased toward polar residues. The FLYWCH-type zinc-finger motif lies at 140 to 195 (IRERVLFDEHLYVFDKCSYDSKKRFFRCERKNTCPARIHTPFDAERVIHKVQVHNH).

Functionally, probable transcription factor. May bind to the promoters of target genes, including micro-RNA genes, in order to repress expression, and acting redundantly with flh-2. This Caenorhabditis elegans protein is FLYWCH transcription factor 3.